The chain runs to 1384 residues: CHD3-type chromatin-remodeling factor PICKLE (1384 aa).

S23 bears the Phosphoserine mark. The PHD-type zinc finger occupies E49 to P96. 2 Chromo domains span residues N98–D180 and T190–D249. The Helicase ATP-binding domain occupies R285–G471. An ATP-binding site is contributed by D298–T305. Positions K376–I383 match the Nuclear localization signal motif. The DEAH box signature appears at D422–H425. The region spanning L599–I760 is the Helicase C-terminal domain. Residues A893–D912 are compositionally biased toward acidic residues. 4 disordered regions span residues A893–M941, G1122–A1152, S1313–G1344, and V1365–D1384. Residues T1138 to A1152 show a composition bias toward polar residues. Basic and acidic residues-rich tracts occupy residues S1316–P1341 and V1367–D1384.

The protein belongs to the SNF2/RAD54 helicase family. As to quaternary structure, interacts with TAF12B. As to expression, mostly expressed in tissue undergoing significant differentiation (meristems and primordia) such as young seedlings, influorescent tissue and young siliques, but not in endosperm and seed coat (at protein level). Levels decrease as organs age. Also present in trichomes.

Its subcellular location is the nucleus. Functionally, chromatin remodeling factor that represses the expression of embryonic trait genes (such as NFYB9/LEC1) upon and after seed germination and thus enables the developmental switch to post-germinative growth. Silences some MADS-box proteins such as PHE1 and PHE2. Plays a role during carpel differentiation. Regulates late processes in cytokinin signaling. The chain is CHD3-type chromatin-remodeling factor PICKLE (PKL) from Arabidopsis thaliana (Mouse-ear cress).